The following is a 292-amino-acid chain: NAD kinase (292 aa).

D73 (proton acceptor) is an active-site residue. NAD(+) contacts are provided by residues 73 to 74 (DG), 147 to 148 (NE), H158, R175, D177, 188 to 193 (TAYSLS), and Q247.

It belongs to the NAD kinase family. It depends on a divalent metal cation as a cofactor.

The protein localises to the cytoplasm. It carries out the reaction NAD(+) + ATP = ADP + NADP(+) + H(+). Its function is as follows. Involved in the regulation of the intracellular balance of NAD and NADP, and is a key enzyme in the biosynthesis of NADP. Catalyzes specifically the phosphorylation on 2'-hydroxyl of the adenosine moiety of NAD to yield NADP. The sequence is that of NAD kinase from Klebsiella pneumoniae subsp. pneumoniae (strain ATCC 700721 / MGH 78578).